Reading from the N-terminus, the 119-residue chain is UPF0102 protein CGSHiGG_01960 (119 aa).

Belongs to the UPF0102 family.

This Haemophilus influenzae (strain PittGG) protein is UPF0102 protein CGSHiGG_01960.